We begin with the raw amino-acid sequence, 105 residues long: MVKQIESKTAFQEALDAAGDKLVVVDFSATWCGPCKMIKPFFHSLSEKYSNVIFLEVDVDDCQDVASECEVKCMPTFQFFKKGQKVGEFSGANKEKLEATINELV.

Residues 2 to 105 form the Thioredoxin domain; that stretch reads VKQIESKTAF…KLEATINELV (104 aa). At Lys3 the chain carries N6-acetyllysine. Position 8 is an N6-succinyllysine (Lys8). Residues Cys32 and Cys35 each act as nucleophile in the active site. An intrachain disulfide couples Cys32 to Cys35. An N6-acetyllysine modification is found at Lys39. S-nitrosocysteine is present on residues Cys62 and Cys69. The residue at position 73 (Cys73) is an S-nitrosocysteine; alternate. At Lys94 the chain carries N6-acetyllysine; alternate. An N6-succinyllysine; alternate modification is found at Lys94.

It belongs to the thioredoxin family. Homodimer; disulfide-linked. Interacts with TXNIP through the redox-active site. Interacts with MAP3K5 and CASP3. In case of infection, interacts with S.typhimurium protein slrP. Interacts with APEX1; the interaction stimulates the FOS/JUN AP-1 DNA-binding activity in a redox-dependent manner. In terms of processing, in the fully reduced protein, both Cys-69 and Cys-73 are nitrosylated in response to nitric oxide (NO). When two disulfide bonds are present in the protein, only Cys-73 is nitrosylated. Cys-73 can serve as donor for nitrosylation of target proteins. Post-translationally, in case of infection, ubiquitinated by S.typhimurium protein slrP, leading to its degradation.

The protein localises to the nucleus. Its subcellular location is the cytoplasm. It localises to the secreted. Its function is as follows. Participates in various redox reactions through the reversible oxidation of its active center dithiol to a disulfide and catalyzes dithiol-disulfide exchange reactions. Plays a role in the reversible S-nitrosylation of cysteine residues in target proteins, and thereby contributes to the response to intracellular nitric oxide. Nitrosylates the active site Cys of CASP3 in response to nitric oxide (NO), and thereby inhibits caspase-3 activity. Induces the FOS/JUN AP-1 DNA-binding activity in ionizing radiation (IR) cells through its oxidation/reduction status and stimulates AP-1 transcriptional activity. ADF augments the expression of the interleukin-2 receptor TAC (IL2R/P55). In Homo sapiens (Human), this protein is Thioredoxin (TXN).